The sequence spans 963 residues: Reversion-inducing cysteine-rich protein with Kazal motifs (963 aa).

The N-terminal stretch at 1–28 (MAAAVAAWPWALFCLAAVPPLLSPGAAG) is a signal peptide. A Knot 1 repeat occupies 31 to 78 (CCYHAKDNLMCRDVCEQILSSKSDSRLKHLLQRAPEYCPESMGEVWGC). The tract at residues 31–332 (CCYHAKDNLM…NAVEVSMLTC (302 aa)) is 5 X Knot repeats. N80 carries an N-linked (GlcNAc...) asparagine glycan. 2 Knot repeats span residues 98–135 (CCEL…LFSC) and 145–191 (CCSY…LIHC). Residue N194 is glycosylated (N-linked (GlcNAc...) asparagine). Knot repeat units lie at residues 210-257 (CCDR…LWQC) and 286-332 (CCSK…MLTC). 2 N-linked (GlcNAc...) asparagine glycosylation sites follow: N291 and N346. 3 consecutive Kazal-like domains span residues 621 to 667 (KFTG…SCIS), 692 to 746 (SFGK…PCQP), and 749 to 783 (KSVE…HCQA). 6 disulfides stabilise this stretch: C627-C652, C629-C648, C637-C665, C710-C729, C718-C744, and C755-C781. S936 carries the GPI-anchor amidated serine lipid modification. The propeptide occupies 937–963 (PSVKVGPVLHCLFISFSFTLLKLMDYI).

This sequence belongs to the RECK family. As to quaternary structure, interacts (via knot repeats) with WNT7A (via disordered linker region); the interaction is direct. Interacts (via knot repeats) with WNT7B (via disordered linker region); the interaction is direct. Interacts with ADGRA2; the interaction is direct. Localizes to the plasma membrane via its GPI-anchor. Released from the plasma membrane following cleavage of the GPI-anchor by GDPD5/GPE2.

The protein resides in the cell membrane. Functions together with ADGRA2 to enable brain endothelial cells to selectively respond to Wnt7 signals (WNT7A or WNT7B). Plays a key role in Wnt7-specific responses: required for central nervous system (CNS) angiogenesis and blood-brain barrier regulation. Acts as a Wnt7-specific coactivator of canonical Wnt signaling by decoding Wnt ligands: acts by interacting specifically with the disordered linker region of Wnt7, thereby conferring ligand selectivity for Wnt7. ADGRA2 is then required to deliver RECK-bound Wnt7 to frizzled by assembling a higher-order RECK-ADGRA2-Fzd-LRP5-LRP6 complex. Also acts as a serine protease inhibitor. The sequence is that of Reversion-inducing cysteine-rich protein with Kazal motifs from Gallus gallus (Chicken).